Consider the following 396-residue polypeptide: Na(+)/H(+) antiporter NhaA (396 aa).

Transmembrane regions (helical) follow at residues 14 to 34 (ASGI…NSGL), 59 to 79 (LLLW…GLEV), 95 to 115 (TFPA…YTFF), 124 to 144 (AGWA…MALL), 154 to 174 (VFLL…IALF), 178 to 198 (QLSL…LWMN), 205 to 225 (IGLY…SGVH), 254 to 274 (ALHP…NAGV), 278 to 298 (GIGL…GLFV), 328 to 348 (IFAV…IASL), and 363 to 383 (LGIL…LRMS).

This sequence belongs to the NhaA Na(+)/H(+) (TC 2.A.33) antiporter family.

It is found in the cell inner membrane. The enzyme catalyses Na(+)(in) + 2 H(+)(out) = Na(+)(out) + 2 H(+)(in). Na(+)/H(+) antiporter that extrudes sodium in exchange for external protons. This Aeromonas salmonicida (strain A449) protein is Na(+)/H(+) antiporter NhaA.